We begin with the raw amino-acid sequence, 636 residues long: Threonine--tRNA ligase (636 aa).

One can recognise a TGS domain in the interval 1 to 61 (MINITLPDDS…RNDCAVRLIT (61 aa)). Residues 238–528 (DHRKIGTRMG…LVEHFAGKFP (291 aa)) form a catalytic region. The Zn(2+) site is built by C329, H380, and H505.

This sequence belongs to the class-II aminoacyl-tRNA synthetase family. In terms of assembly, homodimer. Requires Zn(2+) as cofactor.

It localises to the cytoplasm. The catalysed reaction is tRNA(Thr) + L-threonine + ATP = L-threonyl-tRNA(Thr) + AMP + diphosphate + H(+). Catalyzes the attachment of threonine to tRNA(Thr) in a two-step reaction: L-threonine is first activated by ATP to form Thr-AMP and then transferred to the acceptor end of tRNA(Thr). Also edits incorrectly charged L-seryl-tRNA(Thr). This chain is Threonine--tRNA ligase, found in Desulforapulum autotrophicum (strain ATCC 43914 / DSM 3382 / VKM B-1955 / HRM2) (Desulfobacterium autotrophicum).